A 27-amino-acid polypeptide reads, in one-letter code: Putative phosphoglycerate kinase (27 aa).

It belongs to the phosphoglycerate kinase family. In terms of assembly, monomer. Mg(2+) is required as a cofactor.

It catalyses the reaction (2R)-3-phosphoglycerate + ATP = (2R)-3-phospho-glyceroyl phosphate + ADP. This Pinus strobus (Eastern white pine) protein is Putative phosphoglycerate kinase.